Here is a 129-residue protein sequence, read N- to C-terminus: V-type proton ATPase subunit F 2 (129 aa).

It belongs to the V-ATPase F subunit family. V-ATPase is a heteromultimeric enzyme made up of two complexes: the ATP-hydrolytic V1 complex and the proton translocation V0 complex. The V1 complex consists of three catalytic AB heterodimers that form a heterohexamer, three peripheral stalks each consisting of EG heterodimers, one central rotor including subunits D and F, and the regulatory subunits C and H. The proton translocation complex V0 consists of the proton transport subunit a, a ring of proteolipid subunits c9c'', rotary subunit d, subunits e and f, and the accessory subunits VhaAC45 and ATP6AP2.

In terms of biological role, subunit of the V1 complex of vacuolar(H+)-ATPase (V-ATPase), a multisubunit enzyme composed of a peripheral complex (V1) that hydrolyzes ATP and a membrane integral complex (V0) that translocates protons. V-ATPase is responsible for acidifying and maintaining the pH of intracellular compartments and in some cell types, is targeted to the plasma membrane, where it is responsible for acidifying the extracellular environment. The protein is V-type proton ATPase subunit F 2 (Vha14-2) of Drosophila melanogaster (Fruit fly).